Here is a 220-residue protein sequence, read N- to C-terminus: Nucleoside diphosphate kinase, mitochondrial (220 aa).

The N-terminal 57 residues, 1 to 57 (MFSRFARAFPKILASGASQRTFATVQKAFANPTSKKLIVGSSLLIGSAFATTSFVAC), are a transit peptide targeting the mitochondrion. Lysine 80, phenylalanine 128, arginine 156, threonine 162, arginine 173, and asparagine 183 together coordinate ATP. Histidine 186 serves as the catalytic Pros-phosphohistidine intermediate.

This sequence belongs to the NDK family. The cofactor is Mg(2+).

It is found in the mitochondrion intermembrane space. The catalysed reaction is a 2'-deoxyribonucleoside 5'-diphosphate + ATP = a 2'-deoxyribonucleoside 5'-triphosphate + ADP. It carries out the reaction a ribonucleoside 5'-diphosphate + ATP = a ribonucleoside 5'-triphosphate + ADP. Functionally, major role in the synthesis of nucleoside triphosphates other than ATP. The ATP gamma phosphate is transferred to the NDP beta phosphate via a ping-pong mechanism, using a phosphorylated active-site intermediate. In Dictyostelium discoideum (Social amoeba), this protein is Nucleoside diphosphate kinase, mitochondrial (ndkM).